The primary structure comprises 444 residues: MVKNHNPKNEMQDMLTPLDAEEAAKTKLRLDMREIPKSSIKPEHFHLMYLLEQHSPYFIDAELTELRDSFQIHYDINDNHTPFDNIKSFTKNEKLRYLLNIKNLEEVNRTRYTFVLAPDELFFTRDGLPIAKTRGLQNVVDPLPVSEAEFLTRYKALVICAFNEKQSFDALVEGNLELHKGTPFETKVIEAATLDLLTAFLDEQYQKQEQDYSQNYAYVRKVGHTVFKWVAIGMTTLSVLLIAFLAFLYFSVMKHNERIEKGYQAFVKDDYTQVLNTYDDLDGKKLDKEALYIYAKSYIQTNKQGLEKDKKENLLNNVTPNSNKDYLLYWMELGQGHLDEAINIATYLDDNDITKLALINKLNEIKNNGDLSNDKRSEETKKYNDKLQDILDKEKQVKDEKAKSEEEKAKAKDEKLKQQEENEKKQKEQAQKDKEKRQEAERKK.

At 1–229 (MVKNHNPKNE…RKVGHTVFKW (229 aa)) the chain is on the cytoplasmic side. A helical transmembrane segment spans residues 230–250 (VAIGMTTLSVLLIAFLAFLYF). The Extracellular segment spans residues 251–444 (SVMKHNERIE…EKRQEAERKK (194 aa)). The tract at residues 366–444 (KNNGDLSNDK…EKRQEAERKK (79 aa)) is disordered. Basic and acidic residues predominate over residues 372–444 (SNDKRSEETK…EKRQEAERKK (73 aa)). Residues 387–443 (LQDILDKEKQVKDEKAKSEEEKAKAKDEKLKQQEENEKKQKEQAQKDKEKRQEAERK) adopt a coiled-coil conformation.

This sequence belongs to the EssB family. As to quaternary structure, may oligomerize and interact with other membrane components to form the Ess system. Interacts with EsaA.

It localises to the cell membrane. In terms of biological role, component of the type VII secretion system (Ess). Required for the secretion of EsxA and proper accumulation of EssB and EssD. This Staphylococcus aureus (strain USA300) protein is Type VII secretion system protein EssB.